Reading from the N-terminus, the 219-residue chain is Mediator of RNA polymerase II transcription subunit 20b (219 aa).

It belongs to the Mediator complex subunit 20 family. In terms of assembly, component of the Mediator complex.

Its subcellular location is the nucleus. Component of the Mediator complex, a coactivator involved in the regulated transcription of nearly all RNA polymerase II-dependent genes. Mediator functions as a bridge to convey information from gene-specific regulatory proteins to the basal RNA polymerase II transcription machinery. The Mediator complex, having a compact conformation in its free form, is recruited to promoters by direct interactions with regulatory proteins and serves for the assembly of a functional preinitiation complex with RNA polymerase II and the general transcription factors. The polypeptide is Mediator of RNA polymerase II transcription subunit 20b (MED20B) (Arabidopsis thaliana (Mouse-ear cress)).